A 231-amino-acid polypeptide reads, in one-letter code: NADH-ubiquinone oxidoreductase chain 4 (231 aa).

The next 6 helical transmembrane spans lie at 1 to 21 (PIAG…YGII), 34 to 54 (MFLP…LTCL), 63 to 85 (IAYS…TPWG), 89 to 111 (AMAL…NTTY), 128 to 148 (ILPM…ATPP), and 156 to 176 (LLIM…LGLS).

The protein belongs to the complex I subunit 4 family.

Its subcellular location is the mitochondrion membrane. It carries out the reaction a ubiquinone + NADH + 5 H(+)(in) = a ubiquinol + NAD(+) + 4 H(+)(out). In terms of biological role, core subunit of the mitochondrial membrane respiratory chain NADH dehydrogenase (Complex I) that is believed to belong to the minimal assembly required for catalysis. Complex I functions in the transfer of electrons from NADH to the respiratory chain. The immediate electron acceptor for the enzyme is believed to be ubiquinone. This Trimeresurus stejnegeri (Chinese green tree viper) protein is NADH-ubiquinone oxidoreductase chain 4 (MT-ND4).